A 175-amino-acid chain; its full sequence is MAEAFTSFTFTNLHIPSSYNHSPKQNSGPNHGYWLSKNVNEKRERNLMRGSLCVRKALPHDLPLMAVMVQQIEGMRDIITEKHVWHLSDKAIKNVYMFYIMFTCWGCLYFGSAKDPFYDSEEYRGDGGDGTGYWVYETQEDIEEKARAELWREELIEEIEQKVGGLRELEEAVTK.

The transit peptide at 1–24 directs the protein to the chloroplast; it reads MAEAFTSFTFTNLHIPSSYNHSPK. The chain crosses the membrane as a helical span at residues 95-111; the sequence is VYMFYIMFTCWGCLYFG.

As to quaternary structure, part of the chloroplast NDH complex, composed of a mixture of chloroplast and nucleus encoded subunits. Component of the NDH subcomplex B, at least composed of PnsB1, PnsB2, PnsB3, PnsB4 and PnsB5.

It is found in the plastid. The protein resides in the chloroplast thylakoid membrane. In terms of biological role, NDH shuttles electrons from NAD(P)H:plastoquinone, via FMN and iron-sulfur (Fe-S) centers, to quinones in the photosynthetic chain and possibly in a chloroplast respiratory chain. The immediate electron acceptor for the enzyme in this species is believed to be plastoquinone. Couples the redox reaction to proton translocation, and thus conserves the redox energy in a proton gradient. The polypeptide is Photosynthetic NDH subunit of subcomplex B 4, chloroplastic (Arabidopsis thaliana (Mouse-ear cress)).